The sequence spans 556 residues: Arginine--tRNA ligase (556 aa).

Positions alanine 133–histidine 143 match the 'HIGH' region motif.

Belongs to the class-I aminoacyl-tRNA synthetase family. In terms of assembly, monomer.

It localises to the cytoplasm. The catalysed reaction is tRNA(Arg) + L-arginine + ATP = L-arginyl-tRNA(Arg) + AMP + diphosphate. This Dehalococcoides mccartyi (strain CBDB1) protein is Arginine--tRNA ligase.